The chain runs to 165 residues: ER membrane protein complex subunit 5 (165 aa).

The Cytoplasmic segment spans residues M1 to P3. The helical transmembrane segment at S4 to F22 threads the bilayer. Topologically, residues S23 to I77 are lumenal. Residues D78 to I97 traverse the membrane as a helical segment. Residues A98–R165 lie on the Cytoplasmic side of the membrane. Residue S154 is modified to Phosphoserine.

This sequence belongs to the membrane magnesium transporter (TC 1.A.67) family. As to quaternary structure, component of the ER membrane protein complex (EMC).

It is found in the endoplasmic reticulum membrane. The protein localises to the golgi apparatus membrane. The protein resides in the early endosome membrane. Functionally, part of the endoplasmic reticulum membrane protein complex (EMC) that enables the energy-independent insertion into endoplasmic reticulum membranes of newly synthesized membrane proteins. Preferentially accommodates proteins with transmembrane domains that are weakly hydrophobic or contain destabilizing features such as charged and aromatic residues. Involved in the cotranslational insertion of multi-pass membrane proteins in which stop-transfer membrane-anchor sequences become ER membrane spanning helices. It is also required for the post-translational insertion of tail-anchored/TA proteins in endoplasmic reticulum membranes. By mediating the proper cotranslational insertion of N-terminal transmembrane domains in an N-exo topology, with translocated N-terminus in the lumen of the ER, controls the topology of multi-pass membrane proteins like the G protein-coupled receptors. By regulating the insertion of various proteins in membranes, it is indirectly involved in many cellular processes. May be involved in Mg(2+) transport. The chain is ER membrane protein complex subunit 5 from Bos taurus (Bovine).